A 435-amino-acid polypeptide reads, in one-letter code: tRNA modification GTPase MnmE (435 aa).

(6S)-5-formyl-5,6,7,8-tetrahydrofolate contacts are provided by Arg-20, Glu-77, and Lys-117. One can recognise a TrmE-type G domain in the interval 214–359 (GIKVVIVGVP…FLKEIESFCL (146 aa)). Residues 224-229 (NSGKSS), 243-249 (TEEEGTT), and 268-271 (DTAG) each bind GTP. Mg(2+) is bound by residues Ser-228 and Thr-249. Lys-435 is a binding site for (6S)-5-formyl-5,6,7,8-tetrahydrofolate.

The protein belongs to the TRAFAC class TrmE-Era-EngA-EngB-Septin-like GTPase superfamily. TrmE GTPase family. As to quaternary structure, homodimer. Heterotetramer of two MnmE and two MnmG subunits. Requires K(+) as cofactor.

The protein localises to the cytoplasm. Its function is as follows. Exhibits a very high intrinsic GTPase hydrolysis rate. Involved in the addition of a carboxymethylaminomethyl (cmnm) group at the wobble position (U34) of certain tRNAs, forming tRNA-cmnm(5)s(2)U34. The protein is tRNA modification GTPase MnmE of Bartonella bacilliformis (strain ATCC 35685 / KC583 / Herrer 020/F12,63).